A 480-amino-acid polypeptide reads, in one-letter code: Glutamate--tRNA ligase (480 aa).

Positions 21–31 match the 'HIGH' region motif; the sequence is PSPTGYLHVGG. Zn(2+) is bound by residues C110, C112, C137, and H139. The 'KMSKS' region signature appears at 248–252; sequence KLSKR. K251 provides a ligand contact to ATP.

The protein belongs to the class-I aminoacyl-tRNA synthetase family. Glutamate--tRNA ligase type 1 subfamily. Monomer. It depends on Zn(2+) as a cofactor.

It localises to the cytoplasm. The enzyme catalyses tRNA(Glu) + L-glutamate + ATP = L-glutamyl-tRNA(Glu) + AMP + diphosphate. Its function is as follows. Catalyzes the attachment of glutamate to tRNA(Glu) in a two-step reaction: glutamate is first activated by ATP to form Glu-AMP and then transferred to the acceptor end of tRNA(Glu). The chain is Glutamate--tRNA ligase from Histophilus somni (strain 129Pt) (Haemophilus somnus).